Consider the following 295-residue polypeptide: UDP-N-acetylenolpyruvoylglucosamine reductase (295 aa).

The region spanning 24-188 is the FAD-binding PCMH-type domain; the sequence is KVGGNAEIFF…LKAVFKINKG (165 aa). R168 is a catalytic residue. S217 functions as the Proton donor in the catalytic mechanism. E287 is a catalytic residue.

It belongs to the MurB family. FAD serves as cofactor.

The protein resides in the cytoplasm. The catalysed reaction is UDP-N-acetyl-alpha-D-muramate + NADP(+) = UDP-N-acetyl-3-O-(1-carboxyvinyl)-alpha-D-glucosamine + NADPH + H(+). The protein operates within cell wall biogenesis; peptidoglycan biosynthesis. Cell wall formation. The chain is UDP-N-acetylenolpyruvoylglucosamine reductase from Rickettsia massiliae (strain Mtu5).